The chain runs to 41 residues: Histone H3.2 (41 aa).

Residues 1-41 (MARTKQTARKSTGAKAPRKQLASKAARKSAPATGGIKKPHR) form a disordered region.

Belongs to the histone H3 family. The nucleosome is a histone octamer containing two molecules each of H2A, H2B, H3 and H4 assembled in one H3-H4 heterotetramer and two H2A-H2B heterodimers. The octamer wraps approximately 147 bp of DNA.

It localises to the nucleus. It is found in the chromosome. Functionally, core component of nucleosome. Nucleosomes wrap and compact DNA into chromatin, limiting DNA accessibility to the cellular machineries which require DNA as a template. Histones thereby play a central role in transcription regulation, DNA repair, DNA replication and chromosomal stability. DNA accessibility is regulated via a complex set of post-translational modifications of histones, also called histone code, and nucleosome remodeling. This is Histone H3.2 from Tetrahymena australis.